Consider the following 286-residue polypeptide: 4-diphosphocytidyl-2-C-methyl-D-erythritol kinase (286 aa).

K10 is an active-site residue. 100–110 is a binding site for ATP; the sequence is PMGSGLGGGSS. D142 is an active-site residue.

Belongs to the GHMP kinase family. IspE subfamily. Homodimer.

The enzyme catalyses 4-CDP-2-C-methyl-D-erythritol + ATP = 4-CDP-2-C-methyl-D-erythritol 2-phosphate + ADP + H(+). The protein operates within isoprenoid biosynthesis; isopentenyl diphosphate biosynthesis via DXP pathway; isopentenyl diphosphate from 1-deoxy-D-xylulose 5-phosphate: step 3/6. In terms of biological role, catalyzes the phosphorylation of the position 2 hydroxy group of 4-diphosphocytidyl-2C-methyl-D-erythritol. The chain is 4-diphosphocytidyl-2-C-methyl-D-erythritol kinase from Buchnera aphidicola subsp. Acyrthosiphon pisum (strain APS) (Acyrthosiphon pisum symbiotic bacterium).